We begin with the raw amino-acid sequence, 519 residues long: Chloroethene reductive dehalogenase (519 aa).

The tat-type signal signal peptide spans 1 to 43; that stretch reads MSKFHKTISRRDFMKGLGLAGAGIGAVAASAPVFHDIDELVSS. 4Fe-4S ferredoxin-type domains lie at 388–420 and 435–465; these read PTPPIDAGMFEFCKTCYICRDVCVSGGVHQEDE and LGYRTDWSGCHNQCGMCQSSCPFTYLGLENA. [4Fe-4S] cluster-binding residues include cysteine 400, cysteine 403, cysteine 406, cysteine 410, cysteine 444, cysteine 448, cysteine 451, and cysteine 455.

The protein belongs to the PceA family. The cofactor is [4Fe-4S] cluster. It depends on corrinoid as a cofactor. Post-translationally, predicted to be exported by the Tat system. The position of the signal peptide cleavage has been experimentally proven.

The protein resides in the cell membrane. The enzyme catalyses chloroethene + AH2 = ethene + chloride + A + H(+). It carries out the reaction (Z)-1,2-dichloroethene + AH2 = chloroethene + chloride + A + H(+). It catalyses the reaction 1,1-dichloroethene + AH2 = chloroethene + chloride + A + H(+). Its function is as follows. Catalyzes the reductive dechlorination of chloroethene (or vinyl chloride, VC) to ethene. Can also reduce all dichloroethene (DCE) isomers, but not tetrachloroethene (PCE) or trichloroethene (TCE), at high rates. Reduced methyl viologen can act as the artificial electron donor. The protein is Chloroethene reductive dehalogenase of Dehalococcoides mccartyi (strain VS).